Here is a 274-residue protein sequence, read N- to C-terminus: Protein STAY-GREEN, chloroplastic (274 aa).

Residues Met-1–Arg-48 constitute a chloroplast transit peptide.

Belongs to the staygreen family.

The protein resides in the plastid. Its subcellular location is the chloroplast. Functionally, involved in the disassembling mechanism of the intact light-harvesting complex of photosystem II (LHCPII) in the thylakoid membranes. Required to trigger chlorophyll degradation during natural and dark-induced leaf senescence. The sequence is that of Protein STAY-GREEN, chloroplastic (SGR) from Oryza sativa subsp. indica (Rice).